A 378-amino-acid chain; its full sequence is Actin-related protein 2/3 complex subunit 1B (378 aa).

WD repeat units follow at residues 8–47 (RFAE…HWER), 53–92 (KHDQ…WVPT), 97–138 (RLNR…WVSK), 143–182 (RHES…VDTK), 203–242 (LSYS…PLAQ), 257–295 (ISEK…KAAS), and 331–375 (VHDN…QELG). Residues 319 to 340 (TTANDASDSRGGVHDNSITSIV) form a disordered region.

It belongs to the WD repeat ARPC1 family. In terms of assembly, component of the Arp2/3 complex composed of ARP2, ARP3, ARPC1/p41-ARC, ARPC2/p34-ARC, ARPC3/p21-ARC, ARPC4/p20-ARC and ARPC5/p16-ARC. In terms of tissue distribution, expressed at low levels in all tissues with a relatively highest expression in inflorescences.

The protein localises to the cytoplasm. Its subcellular location is the cytoskeleton. Functionally, functions as a component of the Arp2/3 complex which is involved in regulation of actin polymerization and together with an activating nucleation-promoting factor (NPF) mediates the formation of branched actin networks. Arp2/3 complex plays a critical role in the control of cell morphogenesis via the modulation of cell polarity development. This chain is Actin-related protein 2/3 complex subunit 1B (ARPC1B), found in Arabidopsis thaliana (Mouse-ear cress).